The sequence spans 415 residues: Stimulator of interferon genes protein (415 aa).

The TIR domain maps to 29-163 (HVYHAFISYC…DIIQAISKPE (135 aa)). Residue Glu-104 is part of the active site. Arg-256 is a binding site for 2',3'-cGAMP. The tract at residues 387 to 415 (KSPSSTNMVKSEPNIYREESGKTKSVERG) is disordered. Residues 401 to 415 (IYREESGKTKSVERG) show a composition bias toward basic and acidic residues.

In the N-terminal section; belongs to the Toll-like receptor family. This sequence in the C-terminal section; belongs to the TMEM173 family. As to quaternary structure, homodimer.

The enzyme catalyses NAD(+) + H2O = ADP-D-ribose + nicotinamide + H(+). Functionally, sensor of cytosolic DNA from bacteria and viruses that promotes autophagy. Binds c-di-AMP, 2'3'-cGAMP, 3'3'-cGAMP and to a lesser extent c-di-GMP. Nucleotide binding has not been seen to stimulate NAD(+) hydrolase activity. The chain is Stimulator of interferon genes protein from Magallana gigas (Pacific oyster).